The following is a 237-amino-acid chain: 7-cyano-7-deazaguanine synthase (237 aa).

Residue 10–20 coordinates ATP; it reads FSGGQDSTTCL. 4 residues coordinate Zn(2+): Cys189, Cys198, Cys201, and Cys204.

This sequence belongs to the QueC family. Zn(2+) is required as a cofactor.

The enzyme catalyses 7-carboxy-7-deazaguanine + NH4(+) + ATP = 7-cyano-7-deazaguanine + ADP + phosphate + H2O + H(+). It functions in the pathway purine metabolism; 7-cyano-7-deazaguanine biosynthesis. In terms of biological role, catalyzes the ATP-dependent conversion of 7-carboxy-7-deazaguanine (CDG) to 7-cyano-7-deazaguanine (preQ(0)). The polypeptide is 7-cyano-7-deazaguanine synthase (Aeromonas salmonicida (strain A449)).